A 269-amino-acid chain; its full sequence is NAD kinase (269 aa).

Aspartate 62 acts as the Proton acceptor in catalysis. NAD(+) contacts are provided by residues 62–63, 130–131, lysine 141, arginine 158, aspartate 160, 171–176, alanine 195, and glutamine 229; these read DG, NE, and TAYAMS.

It belongs to the NAD kinase family. Requires a divalent metal cation as cofactor.

The protein resides in the cytoplasm. It catalyses the reaction NAD(+) + ATP = ADP + NADP(+) + H(+). Involved in the regulation of the intracellular balance of NAD and NADP, and is a key enzyme in the biosynthesis of NADP. Catalyzes specifically the phosphorylation on 2'-hydroxyl of the adenosine moiety of NAD to yield NADP. The sequence is that of NAD kinase from Methanospirillum hungatei JF-1 (strain ATCC 27890 / DSM 864 / NBRC 100397 / JF-1).